Reading from the N-terminus, the 373-residue chain is GTPase-activating protein gyp10 (373 aa).

Positions 35–220 (FLMKSLRKSV…RLFDFFISSH (186 aa)) constitute a Rab-GAP TBC domain. The helical transmembrane segment at 343-363 (IFNGCNMLAAITVIGIGIVAS) threads the bilayer.

It localises to the endoplasmic reticulum membrane. In terms of biological role, has a role in vesicular trafficking and septation during cytokinesis. The chain is GTPase-activating protein gyp10 (gyp10) from Schizosaccharomyces pombe (strain 972 / ATCC 24843) (Fission yeast).